The sequence spans 173 residues: Bifunctional protein PyrR (173 aa).

Positions 93 to 105 (IILVDDVLYTGRT) match the PRPP-binding motif.

Belongs to the purine/pyrimidine phosphoribosyltransferase family. PyrR subfamily. In terms of assembly, homodimer and homohexamer; in equilibrium.

It carries out the reaction UMP + diphosphate = 5-phospho-alpha-D-ribose 1-diphosphate + uracil. Functionally, regulates transcriptional attenuation of the pyrimidine nucleotide (pyr) operon by binding in a uridine-dependent manner to specific sites on pyr mRNA. This disrupts an antiterminator hairpin in the RNA and favors formation of a downstream transcription terminator, leading to a reduced expression of downstream genes. In terms of biological role, also displays a weak uracil phosphoribosyltransferase activity which is not physiologically significant. In Streptococcus equi subsp. zooepidemicus (strain MGCS10565), this protein is Bifunctional protein PyrR.